Reading from the N-terminus, the 66-residue chain is Large ribosomal subunit protein bL35 (66 aa).

Positions 1–22 (MAYKLKSHRGAAKRFKKTASGG) are disordered.

Belongs to the bacterial ribosomal protein bL35 family.

In Pseudoalteromonas translucida (strain TAC 125), this protein is Large ribosomal subunit protein bL35.